The chain runs to 1386 residues: Rab3 GTPase-activating protein non-catalytic subunit (1386 aa).

The interval 31–69 is disordered; the sequence is GALRRDPSKTSNWEDDSWGAWEETEPQEPEEEGNTSKTQ. S38 is modified (phosphoserine). Residues 43–63 are compositionally biased toward acidic residues; it reads WEDDSWGAWEETEPQEPEEEG. S448 carries the post-translational modification Phosphoserine. T899 carries the phosphothreonine modification. S914 bears the Phosphoserine mark. Over residues 959 to 973 the composition is skewed to basic and acidic residues; it reads REKDVENPDEPREGI. Positions 959-982 are disordered; the sequence is REKDVENPDEPREGIARSPPEVSE. A Phosphoserine modification is found at S976.

The protein belongs to the Rab3-GAP regulatory subunit family. In terms of assembly, the Rab3 GTPase-activating complex is a heterodimer composed of Rab3gap1 and Rab3gap2. The Rab3 GTPase-activating complex interacts with DMXL2. Interacts with LMAN1.

Its subcellular location is the cytoplasm. The protein resides in the endoplasmic reticulum. Regulatory subunit of the Rab3 GTPase-activating (Rab3GAP) complex composed of RAB3GAP1 and RAB3GAP2, which has GTPase-activating protein (GAP) activity towards various Rab3 subfamily members (RAB3A, RAB3B, RAB3C and RAB3D), RAB5A and RAB43, and guanine nucleotide exchange factor (GEF) activity towards RAB18. As part of the Rab3GAP complex, acts as a GAP for Rab3 proteins by converting active RAB3-GTP to the inactive form RAB3-GDP. Rab3 proteins are involved in regulated exocytosis of neurotransmitters and hormones. The Rab3GAP complex acts as a GEF for RAB18 by promoting the conversion of inactive RAB18-GDP to the active form RAB18-GTP. Recruits and stabilizes RAB18 at the cis-Golgi membrane in fibroblasts where RAB18 is most likely activated. Also involved in RAB18 recruitment at the endoplasmic reticulum (ER) membrane where it maintains proper ER structure. Required for normal eye and brain development. May participate in neurodevelopmental processes such as proliferation, migration and differentiation before synapse formation, and non-synaptic vesicular release of neurotransmitters. In Rattus norvegicus (Rat), this protein is Rab3 GTPase-activating protein non-catalytic subunit.